A 510-amino-acid polypeptide reads, in one-letter code: Calmodulin-binding receptor-like cytoplasmic kinase 3 (510 aa).

The N-terminal stretch at 1–30 (MGGDDLSFTRLVITALFGLLMLLQIKETSA) is a signal peptide. A compositionally biased stretch (polar residues) spans 166–178 (VSSFEMSPSSEKI). The segment at 166-209 (VSSFEMSPSSEKIPQSPFRAPPSPSRVPQSPSRYAMSPRPSRLG) is disordered. Thr214 is modified (phosphothreonine). The 275-residue stretch at 225–499 (FADSHQIGEG…MEAVGKQLWA (275 aa)) folds into the Protein kinase domain. ATP is bound by residues 231 to 239 (IGEGGFGVV) and Lys253. The caM-binding stretch occupies residues 240–265 (FKGVLDDGQVVAIKRAKKEHFENLRT). Asp350 acts as the Proton acceptor in catalysis. Residue Ser354 is modified to Phosphoserine. Phosphothreonine is present on residues Thr386 and Thr391. Tyr399 is modified (phosphotyrosine).

Belongs to the protein kinase superfamily. Ser/Thr protein kinase family. Interacts with calmodulin (CaM) in a Ca(2+)-dependent manner.

It is found in the cytoplasm. It carries out the reaction L-seryl-[protein] + ATP = O-phospho-L-seryl-[protein] + ADP + H(+). The catalysed reaction is L-threonyl-[protein] + ATP = O-phospho-L-threonyl-[protein] + ADP + H(+). In Arabidopsis thaliana (Mouse-ear cress), this protein is Calmodulin-binding receptor-like cytoplasmic kinase 3 (CRCK3).